The chain runs to 97 residues: Aspartyl/glutamyl-tRNA(Asn/Gln) amidotransferase subunit C (97 aa).

Positions 68–97 (ETGFTQEEALSNAPQQSQGQFRTPKVVESA) are disordered. The segment covering 70-88 (GFTQEEALSNAPQQSQGQF) has biased composition (polar residues).

It belongs to the GatC family. In terms of assembly, heterotrimer of A, B and C subunits.

It catalyses the reaction L-glutamyl-tRNA(Gln) + L-glutamine + ATP + H2O = L-glutaminyl-tRNA(Gln) + L-glutamate + ADP + phosphate + H(+). It carries out the reaction L-aspartyl-tRNA(Asn) + L-glutamine + ATP + H2O = L-asparaginyl-tRNA(Asn) + L-glutamate + ADP + phosphate + 2 H(+). Allows the formation of correctly charged Asn-tRNA(Asn) or Gln-tRNA(Gln) through the transamidation of misacylated Asp-tRNA(Asn) or Glu-tRNA(Gln) in organisms which lack either or both of asparaginyl-tRNA or glutaminyl-tRNA synthetases. The reaction takes place in the presence of glutamine and ATP through an activated phospho-Asp-tRNA(Asn) or phospho-Glu-tRNA(Gln). This chain is Aspartyl/glutamyl-tRNA(Asn/Gln) amidotransferase subunit C, found in Akkermansia muciniphila (strain ATCC BAA-835 / DSM 22959 / JCM 33894 / BCRC 81048 / CCUG 64013 / CIP 107961 / Muc).